The primary structure comprises 1115 residues: DNA polymerase III subunit alpha (1115 aa).

Belongs to the DNA polymerase type-C family. DnaE subfamily. DNA polymerase III contains a core (composed of alpha, epsilon and theta chains) that associates with a tau subunit. This core dimerizes to form the PolIII' complex. PolIII' associates with the gamma complex (composed of gamma, delta, delta', psi and chi chains) and with the beta chain to form the complete DNA polymerase III complex. Interacts with SSB (sbbA) via the latter's 6 C-terminal residues.

It localises to the cytoplasm. Its subcellular location is the nucleoid. The enzyme catalyses DNA(n) + a 2'-deoxyribonucleoside 5'-triphosphate = DNA(n+1) + diphosphate. Functionally, DNA polymerase III is a complex, multichain enzyme responsible for most of the replicative synthesis in bacteria. This DNA polymerase also exhibits 3' to 5' exonuclease activity. The alpha chain is the DNA polymerase. This chain is DNA polymerase III subunit alpha (dnaE), found in Bacillus subtilis (strain 168).